The sequence spans 241 residues: GTP cyclohydrolase 1 (241 aa).

The propeptide occupies 1 to 11 (MEKPRGVRCTN). The tract at residues 1–58 (MEKPRGVRCTNGFPERELPRPGASRPAEKSRPPEAKGAQPADAWKAGRPRSEEDNELN) is disordered. Serine 51 and serine 72 each carry phosphoserine. Cysteine 132, histidine 135, and cysteine 203 together coordinate Zn(2+).

The protein belongs to the GTP cyclohydrolase I family. Toroid-shaped homodecamer, composed of two pentamers of five dimers. Interacts with AHSA1 and GCHFR/GFRP. Post-translationally, phosphorylated.

It localises to the cytoplasm. Its subcellular location is the nucleus. It carries out the reaction GTP + H2O = 7,8-dihydroneopterin 3'-triphosphate + formate + H(+). It participates in cofactor biosynthesis; 7,8-dihydroneopterin triphosphate biosynthesis; 7,8-dihydroneopterin triphosphate from GTP: step 1/1. With respect to regulation, GTP shows a positive allosteric effect, and tetrahydrobiopterin inhibits the enzyme activity. Zinc is required for catalytic activity. Inhibited by Mg(2+). Its function is as follows. May positively regulate nitric oxide synthesis in endothelial cells. May be involved in dopamine synthesis. May modify pain sensitivity and persistence. In Rattus norvegicus (Rat), this protein is GTP cyclohydrolase 1 (Gch1).